The following is a 262-amino-acid chain: Putative hydro-lyase Sca_2211 (262 aa).

This sequence belongs to the D-glutamate cyclase family.

This chain is Putative hydro-lyase Sca_2211, found in Staphylococcus carnosus (strain TM300).